The primary structure comprises 291 residues: MNRIQQTFQTSSAPFWYAQLELGFCYENSRTIMSHRKHYGPVRVQKMLWPEKTGVCHAIIVHPPAGIAGGDHLTFQIETEGQAHAVITTPGAGKWYRTNGKQAFQHIYLNVKDDSILEWMPQETMLFDGALAHSETDIHLEQTASFIGWDMLVLGRQARAENFVQGSYHNQFKLWRKNKLLVADTLYFEGGDRWLSSCLGMNNQAVMASFWAVPPEKFRSSFYLEQHIELIRELIMRMDVPVTLTLLEDVLCARFLGNDVRRCHDAFAAIRAKLRRYWFDLDEEFPRIWKT.

The protein belongs to the UreD family. In terms of assembly, ureD, UreF and UreG form a complex that acts as a GTP-hydrolysis-dependent molecular chaperone, activating the urease apoprotein by helping to assemble the nickel containing metallocenter of UreC. The UreE protein probably delivers the nickel.

It is found in the cytoplasm. Functionally, required for maturation of urease via the functional incorporation of the urease nickel metallocenter. The sequence is that of Urease accessory protein UreD from Acinetobacter baumannii (strain ATCC 17978 / DSM 105126 / CIP 53.77 / LMG 1025 / NCDC KC755 / 5377).